Here is a 492-residue protein sequence, read N- to C-terminus: Glutamyl-tRNA(Gln) amidotransferase subunit A (492 aa).

Active-site charge relay system residues include lysine 78 and serine 158. The Acyl-ester intermediate role is filled by serine 182.

The protein belongs to the amidase family. GatA subfamily. In terms of assembly, heterotrimer of A, B and C subunits.

It carries out the reaction L-glutamyl-tRNA(Gln) + L-glutamine + ATP + H2O = L-glutaminyl-tRNA(Gln) + L-glutamate + ADP + phosphate + H(+). Allows the formation of correctly charged Gln-tRNA(Gln) through the transamidation of misacylated Glu-tRNA(Gln) in organisms which lack glutaminyl-tRNA synthetase. The reaction takes place in the presence of glutamine and ATP through an activated gamma-phospho-Glu-tRNA(Gln). The polypeptide is Glutamyl-tRNA(Gln) amidotransferase subunit A (Rhodopseudomonas palustris (strain ATCC BAA-98 / CGA009)).